Consider the following 117-residue polypeptide: SGSCTLRTCWKKMPHFREVGDRLLERFNGASKVMGGNDGKTLIPVGQNIKPPDKQDLIYSDESPDFCLANRKTGSLGTRGRMCNSTAMDISGCDLLCCERGYREESVVFEENCLCRF.

S1 carries O-palmitoleoyl serine; by PORCN lipidation. An intrachain disulfide couples C83 to C98. N-linked (GlcNAc...) asparagine glycosylation occurs at N84.

Belongs to the Wnt family. Palmitoleoylation is required for efficient binding to frizzled receptors. Depalmitoleoylation leads to Wnt signaling pathway inhibition.

Its subcellular location is the secreted. It is found in the extracellular space. The protein localises to the extracellular matrix. Ligand for members of the frizzled family of seven transmembrane receptors. Probable developmental protein. May be a signaling molecule which affects the development of discrete regions of tissues. Is likely to signal over only few cell diameters. This chain is Protein Wnt-6 (wnt6), found in Thunnus thynnus (Atlantic bluefin tuna).